The primary structure comprises 288 residues: POU domain class 2-associating factor 2 (288 aa).

Residues 10 to 32 enclose the OCA domain; sequence KRVYQGVRVKHTVKDLLAEKRSG. 2 disordered regions span residues 24–52 and 247–274; these read DLLA…PFVQ and PPKV…VKED. Residues 35 to 48 are compositionally biased toward low complexity; the sequence is SNSRLNGSVSSSQS.

The protein belongs to the POU2AF family. Interacts with POU2F3 (via the POU domain) in a DNA-dependent manner; this interaction recruits POU2AF2 to chromatin and increases POU2F3 transactivation activity. In terms of tissue distribution, expressed in tuft cells of colon mucosa, as well as in small intestine and thymus.

The protein localises to the cytoplasm. The protein resides in the cytosol. It localises to the nucleus. Functionally, transcriptional coactivator of POU2F3. This complex drives the development of tuft cells, a rare chemosensory cells that coordinate immune and neural functions within mucosal epithelial tissues. The polypeptide is POU domain class 2-associating factor 2 (Homo sapiens (Human)).